We begin with the raw amino-acid sequence, 2343 residues long: Pecanex-like protein 1 (2343 aa).

Helical transmembrane passes span 33–53 (ALHL…YMAL) and 57–77 (MIIV…LKMV). Disordered stretches follow at residues 98 to 163 (FTDQ…GSSR), 271 to 290 (SHSY…SSSA), 306 to 691 (QQQR…TRAR), and 749 to 826 (TRSR…QGQQ). Positions 143–163 (SSRNSYAGLDPSNQIGSGSSR) are enriched in polar residues. A compositionally biased stretch (basic residues) spans 272 to 282 (HSYRKEHRPRG). The span at 372–390 (SLRSLSTRSSGSTESYCSG) shows a compositional bias: low complexity. Positions 396–412 (NSTLSSYKSEQTSSTHI) are enriched in polar residues. Composition is skewed to basic and acidic residues over residues 416-457 (LSEH…DKTA), 507-521 (RPPE…EQGE), and 530-546 (KVCK…DVRP). Basic residues predominate over residues 556–571 (TSAHKPGRRRTGKKRA). Composition is skewed to low complexity over residues 624 to 637 (SDSS…SCQS), 769 to 780 (AATGAAQASEEA), and 809 to 826 (TLLI…QGQQ). 13 consecutive transmembrane segments (helical) span residues 978-998 (FWIL…LLAL), 1009-1029 (ILAV…LIQG), 1034-1054 (IWVF…LKSV), 1068-1088 (IIAY…WLLD), 1118-1138 (LVIV…LPQV), 1162-1182 (LLAA…LYGL), 1195-1215 (HIPV…YHLS), 1268-1288 (LVVC…TVFT), 1296-1316 (YVLY…LPQV), 1406-1426 (SFSS…FFKF), 1434-1454 (TMLL…ELLY), 1458-1478 (FVYT…HAFA), and 1493-1513 (AVVS…AIFI). Residues 2050 to 2120 (EDSDTGGGTS…VQSSLVRQSP (71 aa)) form a disordered region. 2 stretches are compositionally biased toward polar residues: residues 2060–2080 (CPAN…QGST) and 2094–2117 (PTTS…SLVR).

Belongs to the pecanex family. In terms of tissue distribution, specifically expressed in the germ line and not in the somatic cells of the testis, reaching its peak at the pachytene stage of the meiotic prophase. Detected in pachytene spermatocytes and round spermatids (at protein level).

It localises to the membrane. The protein is Pecanex-like protein 1 of Rattus norvegicus (Rat).